The primary structure comprises 98 residues: MKKENYSFKQACAVVGGQSAMARLLGVSPPSVNQWIKGVRQLPAERCPAIERATRGEVLCEELRPDIDWSYLRRSACCSQNMSVKQLNDSNKSSFDHT.

When overexpressed, it induces Rac prophage excision, possibly to counteract the lethal toxicity of YdaT. Overexpression of ydaS or ydaST reduces growth and leads to loss of cell viability. May contribute to toxicity and morphological defects. The chain is Putative transcriptional regulator YdaS (ydaS) from Escherichia coli (strain K12).